A 195-amino-acid chain; its full sequence is Thymidine kinase (195 aa).

ATP contacts are provided by residues 8 to 15 (GLMGSGKS) and 86 to 89 (DESQ). The Proton acceptor role is filled by E87. C146, C151, C184, and H187 together coordinate Zn(2+).

The protein belongs to the thymidine kinase family. In terms of assembly, homotetramer.

Its subcellular location is the cytoplasm. It catalyses the reaction thymidine + ATP = dTMP + ADP + H(+). The polypeptide is Thymidine kinase (tdk) (Bacillus subtilis subsp. natto).